We begin with the raw amino-acid sequence, 181 residues long: Protein Syd (181 aa).

It belongs to the Syd family.

It localises to the cell inner membrane. In terms of biological role, interacts with the SecY protein in vivo. May bind preferentially to an uncomplexed state of SecY, thus functioning either as a chelating agent for excess SecY in the cell or as a regulatory factor that negatively controls the translocase function. The sequence is that of Protein Syd from Salmonella agona (strain SL483).